Here is a 2813-residue protein sequence, read N- to C-terminus: A-kinase anchor protein 13 (2813 aa).

2 disordered regions span residues 304-400 (AQDP…QDSC) and 415-439 (LSSCGNRNEETGTKSSGMPTDQESL). Polar residues predominate over residues 427–439 (TKSSGMPTDQESL). Positions 494-516 (WKNVLQGGESTKERFENSNIGTA) are important for interaction with PRKAR2A. Disordered regions lie at residues 539–585 (AASS…VDQN), 632–653 (HQNSETNSSHAQSQKGKSSPIC), and 690–726 (SESTTARQPSSQDPPDASHCEDPQAHTVTSDPVRDTQ). Basic and acidic residues predominate over residues 561–577 (STEKTAETETSRSREES). Over residues 690 to 702 (SESTTARQPSSQD) the composition is skewed to polar residues. Ser-790 carries the phosphoserine modification. Disordered stretches follow at residues 805-856 (VPSQ…AAEL) and 939-965 (ENALSSGTLQEEQRTPPPGQDTQQFHE). Thr-815 bears the Phosphothreonine mark. Residues 835–844 (PDTRPLEDRA) show a composition bias toward basic and acidic residues. Composition is skewed to polar residues over residues 847–856 (LSTSSTAAEL) and 939–948 (ENALSSGTLQ). Residue Thr-953 is modified to Phosphothreonine. The residue at position 983 (Ser-983) is a Phosphoserine. Disordered regions lie at residues 1431-1455 (GVLKRESGSDSDLFHSPSDDMDSII) and 1467-1542 (DITG…DSIT). A compositionally biased stretch (low complexity) spans 1467–1478 (DITGSSSSTDDT). Positions 1488 to 1497 (GSDVSLSQIL) are enriched in polar residues. Residues Ser-1489, Ser-1507, Ser-1540, Ser-1565, and Ser-1602 each carry the phosphoserine modification. The span at 1525 to 1540 (SEPADPGDVEEEEMDS) shows a compositional bias: acidic residues. The segment at 1585-1715 (RVLGDVVRRP…HSTFHNTSAN (131 aa)) is important for interaction with MAP2K3. Residues 1601-1638 (FSLEGLTGGAGVGNKPSSSLEVSSANAEELRHPFSGEE) form a disordered region. Residues 1615–1626 (KPSSSLEVSSAN) are compositionally biased toward polar residues. The span at 1628–1638 (EELRHPFSGEE) shows a compositional bias: basic and acidic residues. Residues Ser-1642, Ser-1645, and Ser-1647 each carry the phosphoserine modification. Lys-1670 bears the N6-methyllysine mark. The tract at residues 1755–1793 (KMSSSKKSKEKEKEKDKIKEKEKDSKDKEKDKKTVNGHT) is disordered. The stretch at 1758–1790 (SSKKSKEKEKEKDKIKEKEKDSKDKEKDKKTVN) forms a coiled coil. Basic and acidic residues predominate over residues 1761–1788 (KSKEKEKEKDKIKEKEKDSKDKEKDKKT). A Phorbol-ester/DAG-type zinc finger spans residues 1791–1838 (GHTFSSIPVVGPISCSQCMKPFTNKDAYTCANCSAFVHKGCRESLASC). A phosphoserine mark is found at Ser-1876, Ser-1895, and Ser-1929. The tract at residues 1919-2813 (MSNTWKFLSH…VSAEGEEIFC (895 aa)) is interaction with ESR1. Thr-1930 carries the post-translational modification Phosphothreonine. 2 positions are modified to phosphoserine: Ser-1932 and Ser-1945. One can recognise a DH domain in the interval 1994–2191 (KRQEVIYELM…KDVIGAVDSK (198 aa)). Residues 2231–2333 (KLVRDGSVFL…WIQIIQDTIN (103 aa)) form the PH domain. Phosphoserine occurs at positions 2345 and 2398. Positions 2345-2381 (SENEEEKKMLDTRARELKEQLHQKDQKILLLLEEKEM) form a coiled coil. The interval 2466–2502 (ETFGGFDSHQMNASKGGEKEEGDDGQDLRRTESDSGL) is disordered. Residue Thr-2467 is modified to Phosphothreonine. Residue Ser-2473 is modified to Phosphoserine. Positions 2491-2502 (QDLRRTESDSGL) are enriched in basic and acidic residues. Phosphoserine occurs at positions 2563 and 2566. Residues 2568 to 2683 (LIEQEKQRSL…RLSQRQTERD (116 aa)) are a coiled coil. Positions 2665 to 2684 (QEQLRREAERLSQRQTERDL) are enriched in basic and acidic residues. A disordered region spans residues 2665 to 2813 (QEQLRREAER…VSAEGEEIFC (149 aa)). A phosphoserine mark is found at Ser-2703, Ser-2709, and Ser-2728. Polar residues predominate over residues 2720 to 2735 (SLDSELSVSPKRNSIS). The segment covering 2760 to 2771 (QSQAPASTSAST) has biased composition (low complexity).

As to quaternary structure, interacts with the cAMP-dependent protein kinase (PKA) holoenzyme and with the regulatory subunit PRKAR2A. Interacts with RHOA. Also interacts with RHOB and RHOC. Identified in a ternary complex with RHOA and PRKAR2A. Identified in a complex with NR3C1 and RHOA. Interacts with BRAF and KSR1. Identified in a complex with BRAF and KSR1. Component of a signaling complex containing at least AKAP13, PKN1, MAPK14, ZAK and MAP2K3. Within this complex, AKAP13 interacts directly with PKN1, which in turn recruits MAPK14, MAP2K3 and ZAK. Interacts (phosphorylated form) with YWHAB and YWHAZ. Interaction with YWHAB inhibits activation of RHOA, interferes with PKN1 binding and activation of MAP kinases. Interacts with GNA12. Interacts with IKBKB. Interacts with ESR1, THRA, PPARA and NME2. Interacts (via the C-terminal domain after the PH domain) with MEF2C and RXRB. Interacts (via the C-terminal domain after the PH domain) with PRKD1. In terms of tissue distribution, detected in mammary gland. Detected in heart (at protein level). Expressed as a 5.3 kb transcript in hematopoietic cells, skeletal muscle, lung, heart, estrogen-responsive reproductive tissues, including breast ductal epithelium. Also found in testis and breast cancer cell lines. Predominantly expressed as a 10 kb transcript in the heart and at lower levels in the lung, placenta, kidney, pancreas, skeletal muscle and liver. Transcripts of between 6-9 kb are also expressed in myeloid and lymphoid lineages, a variety of epithelial tissues, and in skeletal muscle.

The protein resides in the cytoplasm. It localises to the cytosol. It is found in the cell cortex. Its subcellular location is the nucleus. The protein localises to the membrane. Its function is as follows. Scaffold protein that plays an important role in assembling signaling complexes downstream of several types of G protein-coupled receptors. Activates RHOA in response to signaling via G protein-coupled receptors via its function as Rho guanine nucleotide exchange factor. May also activate other Rho family members. Part of a kinase signaling complex that links ADRA1A and ADRA1B adrenergic receptor signaling to the activation of downstream p38 MAP kinases, such as MAPK11 and MAPK14. Part of a signaling complex that links ADRA1B signaling to the activation of RHOA and IKBKB/IKKB, leading to increased NF-kappa-B transcriptional activity. Part of a RHOA-dependent signaling cascade that mediates responses to lysophosphatidic acid (LPA), a signaling molecule that activates G-protein coupled receptors and potentiates transcriptional activation of the glucocorticoid receptor NR3C1. Part of a signaling cascade that stimulates MEF2C-dependent gene expression in response to lysophosphatidic acid (LPA). Part of a signaling pathway that activates MAPK11 and/or MAPK14 and leads to increased transcription activation of the estrogen receptors ESR1 and ESR2. Part of a signaling cascade that links cAMP and EGFR signaling to BRAF signaling and to PKA-mediated phosphorylation of KSR1, leading to the activation of downstream MAP kinases, such as MAPK1 or MAPK3. Functions as a scaffold protein that anchors cAMP-dependent protein kinase (PKA) and PRKD1. This promotes activation of PRKD1, leading to increased phosphorylation of HDAC5 and ultimately cardiomyocyte hypertrophy. Has no guanine nucleotide exchange activity on CDC42, Ras or Rac. Required for normal embryonic heart development, and in particular for normal sarcomere formation in the developing cardiomyocytes. Plays a role in cardiomyocyte growth and cardiac hypertrophy in response to activation of the beta-adrenergic receptor by phenylephrine or isoproterenol. Required for normal adaptive cardiac hypertrophy in response to pressure overload. Plays a role in osteogenesis. This chain is A-kinase anchor protein 13 (AKAP13), found in Homo sapiens (Human).